We begin with the raw amino-acid sequence, 127 residues long: Protein ApaG (127 aa).

Residues 3–127 (ANSPPTIKCN…FRLAIPNILH (125 aa)) form the ApaG domain.

This Photobacterium profundum (strain SS9) protein is Protein ApaG.